The primary structure comprises 645 residues: Glucans biosynthesis glucosyltransferase H (645 aa).

The tract at residues 1–28 (MDGTVTLSPAPTDLPPVSSLDAGQPTLP) is disordered. 7 consecutive transmembrane segments (helical) span residues 64–84 (LIGG…SVLW), 98–118 (LFVL…AGFI), 423–443 (APMW…GAGI), 465–485 (AIWI…LGYI), 504–524 (ALSI…VMYL), 558–578 (SYGG…LVSP), and 580–600 (LAAW…VVAV).

The protein belongs to the glycosyltransferase 2 family. OpgH subfamily.

Its subcellular location is the cell inner membrane. Its pathway is glycan metabolism; osmoregulated periplasmic glucan (OPG) biosynthesis. Involved in the biosynthesis of osmoregulated periplasmic glucans (OPGs). The chain is Glucans biosynthesis glucosyltransferase H from Xanthomonas campestris pv. campestris (strain 8004).